Reading from the N-terminus, the 235-residue chain is MQKQEKIIEMFNQIAPTYDKANRILSFGADVAWRKKACQRVMSLYLKKDLKIADIACGTGDMIEIWQESALKMEKNILNIKGIDPSSGMLNVAKEKFPNVEFIEAGAQNLPLESQSLDILSISYGIRNVVERQKALSEFARVLQKDGILVVLEFTKREKGGFIAACRDFYLKNILPSIGGIISKNKSAYEYLPNSIEGFLSKEEFILELKNAGFEILDYKSFSFGVSSMFIAKKL.

Residues threonine 59, aspartate 84, and serine 123 each coordinate S-adenosyl-L-methionine.

Belongs to the class I-like SAM-binding methyltransferase superfamily. MenG/UbiE family.

It catalyses the reaction a 2-demethylmenaquinol + S-adenosyl-L-methionine = a menaquinol + S-adenosyl-L-homocysteine + H(+). The catalysed reaction is a 2-methoxy-6-(all-trans-polyprenyl)benzene-1,4-diol + S-adenosyl-L-methionine = a 5-methoxy-2-methyl-3-(all-trans-polyprenyl)benzene-1,4-diol + S-adenosyl-L-homocysteine + H(+). It participates in quinol/quinone metabolism; menaquinone biosynthesis; menaquinol from 1,4-dihydroxy-2-naphthoate: step 2/2. It functions in the pathway cofactor biosynthesis; ubiquinone biosynthesis. In terms of biological role, methyltransferase required for the conversion of demethylmenaquinol (DMKH2) to menaquinol (MKH2) and the conversion of 2-polyprenyl-6-methoxy-1,4-benzoquinol (DDMQH2) to 2-polyprenyl-3-methyl-6-methoxy-1,4-benzoquinol (DMQH2). This is Ubiquinone/menaquinone biosynthesis C-methyltransferase UbiE from Campylobacter jejuni subsp. jejuni serotype O:23/36 (strain 81-176).